The chain runs to 459 residues: Phosphomethylpyrimidine synthase (459 aa).

Residues asparagine 80, methionine 109, tyrosine 139, histidine 175, 195-197, 236-239, and glutamate 275 each bind substrate; these read SRG and DSLR. Histidine 279 contributes to the Zn(2+) binding site. Position 302 (tyrosine 302) interacts with substrate. Histidine 343 contacts Zn(2+). The [4Fe-4S] cluster site is built by cysteine 423, cysteine 426, and cysteine 431.

It belongs to the ThiC family. It depends on [4Fe-4S] cluster as a cofactor.

The catalysed reaction is 5-amino-1-(5-phospho-beta-D-ribosyl)imidazole + S-adenosyl-L-methionine = 4-amino-2-methyl-5-(phosphooxymethyl)pyrimidine + CO + 5'-deoxyadenosine + formate + L-methionine + 3 H(+). Its pathway is cofactor biosynthesis; thiamine diphosphate biosynthesis. Functionally, catalyzes the synthesis of the hydroxymethylpyrimidine phosphate (HMP-P) moiety of thiamine from aminoimidazole ribotide (AIR) in a radical S-adenosyl-L-methionine (SAM)-dependent reaction. The polypeptide is Phosphomethylpyrimidine synthase (Prochlorococcus marinus (strain MIT 9211)).